We begin with the raw amino-acid sequence, 204 residues long: Probable proteasome subunit beta type-3 (204 aa).

Belongs to the peptidase T1B family. As to quaternary structure, the 26S proteasome consists of a 20S proteasome core and two 19S regulatory subunits. The 20S proteasome core is composed of 28 subunits that are arranged in four stacked rings, resulting in a barrel-shaped structure. The two end rings are each formed by seven alpha subunits, and the two central rings are each formed by seven beta subunits. The catalytic chamber with the active sites is on the inside of the barrel.

It is found in the cytoplasm. The protein resides in the nucleus. In terms of biological role, non-catalytic component of the proteasome, a multicatalytic proteinase complex which is characterized by its ability to cleave peptides with Arg, Phe, Tyr, Leu, and Glu adjacent to the leaving group at neutral or slightly basic pH. The proteasome has an ATP-dependent proteolytic activity. This chain is Probable proteasome subunit beta type-3 (pup3), found in Schizosaccharomyces pombe (strain 972 / ATCC 24843) (Fission yeast).